Consider the following 254-residue polypeptide: Triosephosphate isomerase (254 aa).

12-14 is a substrate binding site; it reads NWK. The Electrophile role is filled by H99. E169 acts as the Proton acceptor in catalysis. Substrate is bound by residues G175, S214, and 235–236; that span reads GG.

Belongs to the triosephosphate isomerase family. In terms of assembly, homodimer.

It localises to the cytoplasm. It catalyses the reaction D-glyceraldehyde 3-phosphate = dihydroxyacetone phosphate. Its pathway is carbohydrate biosynthesis; gluconeogenesis. It participates in carbohydrate degradation; glycolysis; D-glyceraldehyde 3-phosphate from glycerone phosphate: step 1/1. In terms of biological role, involved in the gluconeogenesis. Catalyzes stereospecifically the conversion of dihydroxyacetone phosphate (DHAP) to D-glyceraldehyde-3-phosphate (G3P). In Bartonella henselae (strain ATCC 49882 / DSM 28221 / CCUG 30454 / Houston 1) (Rochalimaea henselae), this protein is Triosephosphate isomerase.